The following is a 110-amino-acid chain: Nucleoid-associated protein bbp_426 (110 aa).

It belongs to the YbaB/EbfC family. Homodimer.

It is found in the cytoplasm. The protein localises to the nucleoid. Its function is as follows. Binds to DNA and alters its conformation. May be involved in regulation of gene expression, nucleoid organization and DNA protection. This Buchnera aphidicola subsp. Baizongia pistaciae (strain Bp) protein is Nucleoid-associated protein bbp_426.